The following is a 670-amino-acid chain: UvrABC system protein B (670 aa).

In terms of domain architecture, Helicase ATP-binding spans 26–183 (EGLEDGLAHQ…RRLAELQYAR (158 aa)). 39 to 46 (GVTGSGKT) is a binding site for ATP. The Beta-hairpin motif lies at 92-115 (YYDYYQPEAYVPSSDTFIEKDAAV). The region spanning 431-597 (QVDDLLSEIR…GLNKKVSDVL (167 aa)) is the Helicase C-terminal domain. Residues 630-665 (DQKIRELEAQMYTHAQNLEFELAAGLRDEIHQLREQ) enclose the UVR domain.

The protein belongs to the UvrB family. As to quaternary structure, forms a heterotetramer with UvrA during the search for lesions. Interacts with UvrC in an incision complex.

The protein resides in the cytoplasm. Its function is as follows. The UvrABC repair system catalyzes the recognition and processing of DNA lesions. A damage recognition complex composed of 2 UvrA and 2 UvrB subunits scans DNA for abnormalities. Upon binding of the UvrA(2)B(2) complex to a putative damaged site, the DNA wraps around one UvrB monomer. DNA wrap is dependent on ATP binding by UvrB and probably causes local melting of the DNA helix, facilitating insertion of UvrB beta-hairpin between the DNA strands. Then UvrB probes one DNA strand for the presence of a lesion. If a lesion is found the UvrA subunits dissociate and the UvrB-DNA preincision complex is formed. This complex is subsequently bound by UvrC and the second UvrB is released. If no lesion is found, the DNA wraps around the other UvrB subunit that will check the other stand for damage. In Serratia proteamaculans (strain 568), this protein is UvrABC system protein B.